Reading from the N-terminus, the 104-residue chain is MTSVETILNYLAYFNRGDYVIVLVIKQIIEKYNDKVKELDTLKNQYQNLQQDYENLKQQVSLQRQTMISTTNDIKQIVNDFKENYVNIHPEYISDSQTNCHQVE.

The stretch at 24-69 (VIKQIIEKYNDKVKELDTLKNQYQNLQQDYENLKQQVSLQRQTMIS) forms a coiled coil.

This is an uncharacterized protein from Acanthamoeba polyphaga mimivirus (APMV).